The following is a 302-amino-acid chain: uncharacterized protein (302 aa).

Glutamate 47 is a catalytic residue.

This sequence belongs to the PhzF family.

This is an uncharacterized protein from Mesorhizobium japonicum (strain LMG 29417 / CECT 9101 / MAFF 303099) (Mesorhizobium loti (strain MAFF 303099)).